A 168-amino-acid polypeptide reads, in one-letter code: ATP synthase F(1) complex subunit delta, mitochondrial (168 aa).

A mitochondrion-targeting transit peptide spans 1 to 22 (MLPSALLRRPGLGRLVRQVRLY). N6-acetyllysine; alternate occurs at positions 136 and 165. An N6-succinyllysine; alternate mark is found at Lys136 and Lys165.

The protein belongs to the ATPase epsilon chain family. In terms of assembly, component of the ATP synthase complex composed at least of ATP5F1A/subunit alpha, ATP5F1B/subunit beta, ATP5MC1/subunit c (homooctomer), MT-ATP6/subunit a, MT-ATP8/subunit 8, ATP5ME/subunit e, ATP5MF/subunit f, ATP5MG/subunit g, ATP5MK/subunit k, ATP5MJ/subunit j, ATP5F1C/subunit gamma, ATP5F1D/subunit delta, ATP5F1E/subunit epsilon, ATP5PF/subunit F6, ATP5PB/subunit b, ATP5PD/subunit d, ATP5PO/subunit OSCP. ATP synthase complex consists of a soluble F(1) head domain (subunits alpha(3) and beta(3)) - the catalytic core - and a membrane F(0) domain - the membrane proton channel (subunits c, a, 8, e, f, g, k and j). These two domains are linked by a central stalk (subunits gamma, delta, and epsilon) rotating inside the F1 region and a stationary peripheral stalk (subunits F6, b, d, and OSCP). Component of a complex composed at least by ATPIF1, ATP5F1A, ATP5F1B, ATP5F1C AND ATP5F1E.

The protein localises to the mitochondrion. It localises to the mitochondrion inner membrane. Functionally, subunit delta, of the mitochondrial membrane ATP synthase complex (F(1)F(0) ATP synthase or Complex V) that produces ATP from ADP in the presence of a proton gradient across the membrane which is generated by electron transport complexes of the respiratory chain. ATP synthase complex consist of a soluble F(1) head domain - the catalytic core - and a membrane F(1) domain - the membrane proton channel. These two domains are linked by a central stalk rotating inside the F(1) region and a stationary peripheral stalk. During catalysis, ATP synthesis in the catalytic domain of F(1) is coupled via a rotary mechanism of the central stalk subunits to proton translocation. In vivo, can only synthesize ATP although its ATP hydrolase activity can be activated artificially in vitro. With the central stalk subunit gamma, is essential for the biogenesis of F(1) catalytic part of the ATP synthase complex namely in the formation of F1 assembly intermediate. In Bos taurus (Bovine), this protein is ATP synthase F(1) complex subunit delta, mitochondrial.